Reading from the N-terminus, the 348-residue chain is Uroporphyrinogen decarboxylase (348 aa).

Substrate is bound by residues 28-32, aspartate 78, tyrosine 154, threonine 209, and histidine 325; that span reads RQAGR.

The protein belongs to the uroporphyrinogen decarboxylase family. Homodimer.

The protein localises to the cytoplasm. The catalysed reaction is uroporphyrinogen III + 4 H(+) = coproporphyrinogen III + 4 CO2. It participates in porphyrin-containing compound metabolism; protoporphyrin-IX biosynthesis; coproporphyrinogen-III from 5-aminolevulinate: step 4/4. In terms of biological role, catalyzes the decarboxylation of four acetate groups of uroporphyrinogen-III to yield coproporphyrinogen-III. The sequence is that of Uroporphyrinogen decarboxylase from Rhodopseudomonas palustris (strain HaA2).